The chain runs to 78 residues: Large ribosomal subunit protein eL20 (78 aa).

The protein belongs to the eukaryotic ribosomal protein eL20 family. Part of the 50S ribosomal subunit. Binds 23S rRNA.

The sequence is that of Large ribosomal subunit protein eL20 from Thermococcus sibiricus (strain DSM 12597 / MM 739).